Consider the following 99-residue polypeptide: Integration host factor subunit alpha (99 aa).

The tract at residues phenylalanine 49–aspartate 70 is disordered.

Belongs to the bacterial histone-like protein family. As to quaternary structure, heterodimer of an alpha and a beta chain.

Functionally, this protein is one of the two subunits of integration host factor, a specific DNA-binding protein that functions in genetic recombination as well as in transcriptional and translational control. This Cronobacter sakazakii (strain ATCC BAA-894) (Enterobacter sakazakii) protein is Integration host factor subunit alpha.